A 521-amino-acid chain; its full sequence is Importin subunit alpha-3 (521 aa).

Ala2 carries the post-translational modification N-acetylalanine. Residues 2-58 (ADNEKLDNQRLKNFKNKGRDLETMRRQRNEVVVELRKNKRDEHLLKRRNVPHEDICE) enclose the IBB domain. The Nuclear localization signal signature appears at 43 to 52 (EHLLKRRNVP). Ser60 carries the phosphoserine modification. The ARM 1; truncated repeat unit spans residues 66-106 (YRVQNTSLEAIVQNASSDNQGIQLSAVQAARKLLSSDRNPP). ARM repeat units lie at residues 107 to 149 (IDDL…TSEQ), 150 to 194 (TQAV…CRDY), 195 to 233 (VISLGVVKPLLSFISPSIPITFLRNVTWVMVNLCRHKDP), 234 to 278 (PPPM…EQIQ), 279 to 318 (MVIDSGIVPHLVPLLSHQEVKVQTAALRAVGNIVTGTDEQ), 319 to 360 (TQVV…NQQQ), 361 to 400 (VQAVIDANLVPMIIHLLDKGDFGTQKEAAWAISNLTISGR), and 401 to 443 (KDQV…KMAE). The segment at 137 to 229 (WALTNIASGT…VTWVMVNLCR (93 aa)) is NLS binding site (major). Positions 306–394 (RAVGNIVTGT…QKEAAWAISN (89 aa)) are NLS binding site (minor). One copy of the ARM 10; atypical repeat lies at 447 to 485 (ETIGNLIEECGGLEKIEQLQNHENEDIYKLAYEIIDQFF).

Belongs to the importin alpha family. Forms a complex with importin subunit beta-1 (KPNB1). Interacts with SNAI1. Interacts with TALDO1 isoform 1. Interacts with CYB1. In terms of assembly, (Microbial infection) Interacts with MERS virus protein OF4b; this interaction prevents the translocation of NF-kappa-B complex to the nucleus. As to quaternary structure, (Microbial infection) Interacts with human adenovirus 5 E1A protein; this interaction allows E1A import into the host nucleus. (Microbial infection) Interacts with Chikungunya virus capsid protein; this interaction allows the nuclear import of the viral capsid protein. Highly expressed in testis, ovary, small intestine, heart, skeletal muscle, lung and pancreas, but barely detectable in kidney, thymus, colon and peripheral blood leukocytes.

Its subcellular location is the cytoplasm. The protein resides in the nucleus. Its function is as follows. Functions in nuclear protein import as an adapter protein for nuclear receptor KPNB1. Binds specifically and directly to substrates containing either a simple or bipartite NLS motif. Docking of the importin/substrate complex to the nuclear pore complex (NPC) is mediated by KPNB1 through binding to nucleoporin FxFG repeats and the complex is subsequently translocated through the pore by an energy requiring, Ran-dependent mechanism. At the nucleoplasmic side of the NPC, Ran binds to importin-beta and the three components separate and importin-alpha and -beta are re-exported from the nucleus to the cytoplasm where GTP hydrolysis releases Ran from importin. The directionality of nuclear import is thought to be conferred by an asymmetric distribution of the GTP- and GDP-bound forms of Ran between the cytoplasm and nucleus. Mediates nuclear import of AARS1, MRTFA and RANBP3. Functionally, (Microbial infection) In vitro, mediates the nuclear import of human cytomegalovirus UL84 by recognizing a non-classical NLS. In vitro, mediates the nuclear import of human cytomegalovirus UL84 by recognizing a non-classical NLS. This is Importin subunit alpha-3 from Homo sapiens (Human).